The following is a 642-amino-acid chain: Tigger transposable element derived 5 (642 aa).

The interval 1–54 (MYPASPSAGPALHPVPHRARLPRPRCLAEPPRSPAPGPGSTARPPPPAPGPRPR) is disordered. The segment covering 31-52 (PRSPAPGPGSTARPPPPAPGPR) has biased composition (pro residues). Positions 56 to 107 (AVKMTFRKAYSIKDKLQAIERVKGGERQASVCRDFGVPGGTLRGWLKDEPKL) constitute an HTH psq-type domain. 2 DNA-binding regions (H-T-H motif) span residues 83–103 (QASV…WLKD) and 154–187 (PVIQ…WQKR). One can recognise an HTH CENPB-type domain in the interval 121 to 194 (QRKKMRLANE…QKRHGISSQR (74 aa)). Positions 198–208 (EAEPPVAGPAP) are enriched in low complexity. Residues 198–230 (EAEPPVAGPAPVKEEPAQPSSAGLLLDGTPATL) form a disordered region. The 126-residue stretch at 239 to 364 (DEQIYNANVT…CLQQKAVLLV (126 aa)) folds into the DDE-1 domain. The segment at 543 to 583 (GLPEGCGEEVAPAAPPSPASLPSSIGAGEEEEEEATEQGGV) is disordered.

This sequence belongs to the tigger transposable element derived protein family.

It localises to the nucleus. The chain is Tigger transposable element derived 5 (Tigd5) from Rattus norvegicus (Rat).